The chain runs to 204 residues: Somatotropin (204 aa).

Residues 1–17 form the signal peptide; that stretch reads MDRVVLMLSVLSLGVSS. Gln18 is modified (pyrrolidone carboxylic acid). A Zn(2+)-binding site is contributed by His36. Cys69 and Cys177 are disulfide-bonded. Residue Glu186 coordinates Zn(2+). The cysteines at positions 194 and 202 are disulfide-linked.

It belongs to the somatotropin/prolactin family.

It localises to the secreted. In terms of biological role, growth hormone plays an important role in growth control and is involved in the regulation of several anabolic processes. Implicated as an osmoregulatory substance important for seawater adaptation. In Acanthopagrus latus (Yellowfin seabream), this protein is Somatotropin (gh).